The following is a 191-amino-acid chain: Peptidyl-tRNA hydrolase (191 aa).

TRNA is bound at residue tyrosine 17. The active-site Proton acceptor is histidine 22. TRNA-binding residues include tyrosine 68, asparagine 70, and asparagine 116.

This sequence belongs to the PTH family. Monomer.

It is found in the cytoplasm. It catalyses the reaction an N-acyl-L-alpha-aminoacyl-tRNA + H2O = an N-acyl-L-amino acid + a tRNA + H(+). Its function is as follows. Hydrolyzes ribosome-free peptidyl-tRNAs (with 1 or more amino acids incorporated), which drop off the ribosome during protein synthesis, or as a result of ribosome stalling. Functionally, catalyzes the release of premature peptidyl moieties from peptidyl-tRNA molecules trapped in stalled 50S ribosomal subunits, and thus maintains levels of free tRNAs and 50S ribosomes. This Mycobacterium avium (strain 104) protein is Peptidyl-tRNA hydrolase.